The sequence spans 180 residues: Large ribosomal subunit protein uL6 (180 aa).

The protein belongs to the universal ribosomal protein uL6 family. Part of the 50S ribosomal subunit.

In terms of biological role, this protein binds to the 23S rRNA, and is important in its secondary structure. It is located near the subunit interface in the base of the L7/L12 stalk, and near the tRNA binding site of the peptidyltransferase center. This chain is Large ribosomal subunit protein uL6, found in Borrelia turicatae (strain 91E135).